Here is a 147-residue protein sequence, read N- to C-terminus: Large ribosomal subunit protein uL15 (147 aa).

Residues 1-28 show a composition bias toward basic residues; that stretch reads MIRRRKKVRKLRGSHTHGWGCKKKHRGG. The disordered stretch occupies residues 1 to 43; sequence MIRRRKKVRKLRGSHTHGWGCKKKHRGGGSKGGRGMAGTGKRN. Residues 29-38 show a composition bias toward gly residues; sequence GSKGGRGMAG.

The protein belongs to the universal ribosomal protein uL15 family. As to quaternary structure, part of the 50S ribosomal subunit.

Binds to the 23S rRNA. The sequence is that of Large ribosomal subunit protein uL15 from Pyrococcus abyssi (strain GE5 / Orsay).